A 628-amino-acid polypeptide reads, in one-letter code: Forkhead box protein O (628 aa).

Phosphothreonine; by PKB/AKT1 is present on Thr50. Ser81 is subject to Phosphoserine. The segment at residues 101 to 207 (WGNLSYADLI…ETSRYEKRRG (107 aa)) is a DNA-binding region (fork-head). Disordered stretches follow at residues 188–210 (KSVR…GRAK) and 223–270 (GLND…SSCG). Ser196 carries the post-translational modification Phosphoserine; by PKB/AKT1. Composition is skewed to polar residues over residues 227-236 (ATPSPSSSVS) and 261-270 (RASSNASSCG). Ser264 bears the Phosphoserine; by PKB/AKT1 mark. Phosphoserine occurs at positions 267, 268, and 273. 2 disordered regions span residues 327-373 (SAAS…SLQP) and 398-451 (NSVT…QQQQ). Pro residues predominate over residues 334–343 (TQPPPPPYPA). A compositionally biased stretch (low complexity) spans 344–359 (PQQQQQQQPQQQQAYT). Over residues 411 to 423 (SEPSSDSLNTYSN) the composition is skewed to polar residues. Positions 438-451 (QQQRQQQQQQQQQQ) are enriched in low complexity.

In terms of assembly, interacts with melt.

It localises to the cytoplasm. Its subcellular location is the nucleus. Transcription factor involved in the regulation of the insulin signaling pathway. Consistently activates both the downstream target Thor\d4EBP and the feedback control target InR. Involved in negative regulation of the cell cycle, modulating cell growth and proliferation. In response to cellular stresses, such as nutrient deprivation or increased levels of reactive oxygen species, foxo is activated and inhibits growth through the action of target genes such as Thor. Foxo activated in the adult fat body can regulate lifespan in adults; an insulin peptide itself may function as one secondary messenger of insulin-regulated aging. Also regulates Lip4, homolog of human acid lipases, thereby acting as a key modulator of lipid metabolism by insulin signaling and integrates insulin responses to glucose and lipid homeostasis. In Drosophila willistoni (Fruit fly), this protein is Forkhead box protein O.